Consider the following 492-residue polypeptide: Cytochrome P450 monooxygenase MYCFIDRAFT_204672 (492 aa).

N116 is a glycosylation site (N-linked (GlcNAc...) asparagine). The helical transmembrane segment at 269–293 threads the bilayer; that stretch reads FLISMIFISAANGCVVSGAMLYSIA. An N-linked (GlcNAc...) asparagine glycan is attached at N335. C430 lines the heme pocket.

It belongs to the cytochrome P450 family. Requires heme as cofactor.

The protein localises to the membrane. It participates in secondary metabolite biosynthesis. Functionally, cytochrome P450 monooxygenase; part of the gene cluster that mediates the biosynthesis of an emodin derivative that may be involved in black Sigatoka disease of banana. The pathway begins with the synthesis of atrochrysone thioester by the polyketide synthase PKS8-1. The atrochrysone carboxyl ACP thioesterase MYCFIDRAFT_190111 then breaks the thioester bond and releases the atrochrysone carboxylic acid from PKS8-1. The decarboxylase MYCFIDRAFT_34057 then catalyzes the concerted decarboxylation-elimination required to convert atochrysone carboxylic acid into emodin anthrone, which is further oxidized to emodin by the anthrone oxygenase MYCFIDRAFT_34418. The functions of the other tailoring enzymes as well as the final product of the cluster have still to be identified. This chain is Cytochrome P450 monooxygenase MYCFIDRAFT_204672, found in Pseudocercospora fijiensis (strain CIRAD86) (Black leaf streak disease fungus).